Consider the following 269-residue polypeptide: uncharacterized protein (269 aa).

A coiled-coil region spans residues 52 to 262 (KNVYEQLVAT…RKILVESINK (211 aa)).

This is an uncharacterized protein from Caenorhabditis elegans.